The sequence spans 199 residues: Superoxide dismutase [Mn] (199 aa).

4 residues coordinate Mn(2+): H27, H76, D160, and H164.

Belongs to the iron/manganese superoxide dismutase family. Requires Mn(2+) as cofactor.

The enzyme catalyses 2 superoxide + 2 H(+) = H2O2 + O2. Functionally, destroys superoxide anion radicals which are normally produced within the cells and which are toxic to biological systems. In Corynebacterium diphtheriae (strain ATCC 700971 / NCTC 13129 / Biotype gravis), this protein is Superoxide dismutase [Mn] (sodA).